Consider the following 582-residue polypeptide: Probable DNA ligase (582 aa).

Position 248 (E248) interacts with ATP. Catalysis depends on K250, which acts as the N6-AMP-lysine intermediate. The ATP site is built by R255, R270, E299, F339, R416, and K422.

Belongs to the ATP-dependent DNA ligase family. Mg(2+) is required as a cofactor.

The catalysed reaction is ATP + (deoxyribonucleotide)n-3'-hydroxyl + 5'-phospho-(deoxyribonucleotide)m = (deoxyribonucleotide)n+m + AMP + diphosphate.. Its function is as follows. DNA ligase that seals nicks in double-stranded DNA during DNA replication, DNA recombination and DNA repair. The protein is Probable DNA ligase of Persephonella marina (strain DSM 14350 / EX-H1).